We begin with the raw amino-acid sequence, 329 residues long: Fructose-1,6-bisphosphatase class 1 (329 aa).

Positions 84, 103, 105, and 106 each coordinate Mg(2+). Residues 106-109 (DGSS), asparagine 196, and lysine 262 each bind substrate. Glutamate 268 is a Mg(2+) binding site.

The protein belongs to the FBPase class 1 family. As to quaternary structure, homotetramer. Mg(2+) is required as a cofactor.

It localises to the cytoplasm. The enzyme catalyses beta-D-fructose 1,6-bisphosphate + H2O = beta-D-fructose 6-phosphate + phosphate. It functions in the pathway carbohydrate biosynthesis; gluconeogenesis. The chain is Fructose-1,6-bisphosphatase class 1 from Shewanella halifaxensis (strain HAW-EB4).